A 270-amino-acid polypeptide reads, in one-letter code: Putative phosphoenolpyruvate synthase regulatory protein (270 aa).

ADP is bound at residue glycine 150–threonine 157.

The protein belongs to the pyruvate, phosphate/water dikinase regulatory protein family. PSRP subfamily.

The enzyme catalyses [pyruvate, water dikinase] + ADP = [pyruvate, water dikinase]-phosphate + AMP + H(+). It catalyses the reaction [pyruvate, water dikinase]-phosphate + phosphate + H(+) = [pyruvate, water dikinase] + diphosphate. In terms of biological role, bifunctional serine/threonine kinase and phosphorylase involved in the regulation of the phosphoenolpyruvate synthase (PEPS) by catalyzing its phosphorylation/dephosphorylation. In Aeromonas salmonicida (strain A449), this protein is Putative phosphoenolpyruvate synthase regulatory protein.